The primary structure comprises 536 residues: Protein ST7 homolog (536 aa).

The next 2 helical transmembrane spans lie at 3–23 and 49–69; these read CSWT…LFFL and FYVA…IFEW. The stretch at 192–219 forms a coiled coil; it reads AEEDTETVAQAENVLRRALRAIENTLST. The helical transmembrane segment at 464-484 threads the bilayer; it reads STLGMLIQTFACLAICILAVL.

It belongs to the ST7 family.

Its subcellular location is the membrane. In Caenorhabditis briggsae, this protein is Protein ST7 homolog.